The chain runs to 160 residues: SsrA-binding protein (160 aa).

The tract at residues 133–160 (GKKLHDKRDTEKERDWKREQQRLLRDRG) is disordered. The segment covering 138–160 (DKRDTEKERDWKREQQRLLRDRG) has biased composition (basic and acidic residues).

The protein belongs to the SmpB family.

The protein resides in the cytoplasm. Functionally, required for rescue of stalled ribosomes mediated by trans-translation. Binds to transfer-messenger RNA (tmRNA), required for stable association of tmRNA with ribosomes. tmRNA and SmpB together mimic tRNA shape, replacing the anticodon stem-loop with SmpB. tmRNA is encoded by the ssrA gene; the 2 termini fold to resemble tRNA(Ala) and it encodes a 'tag peptide', a short internal open reading frame. During trans-translation Ala-aminoacylated tmRNA acts like a tRNA, entering the A-site of stalled ribosomes, displacing the stalled mRNA. The ribosome then switches to translate the ORF on the tmRNA; the nascent peptide is terminated with the 'tag peptide' encoded by the tmRNA and targeted for degradation. The ribosome is freed to recommence translation, which seems to be the essential function of trans-translation. The chain is SsrA-binding protein from Rhizorhabdus wittichii (strain DSM 6014 / CCUG 31198 / JCM 15750 / NBRC 105917 / EY 4224 / RW1) (Sphingomonas wittichii).